We begin with the raw amino-acid sequence, 169 residues long: Large ribosomal subunit protein bL19m (169 aa).

Residues 1-16 constitute a mitochondrion transit peptide; the sequence is MWSRNVRLLGSWTRSY.

The protein belongs to the bacterial ribosomal protein bL19 family. In terms of assembly, component of the mitochondrial large ribosomal subunit (mt-LSU). Mature yeast 74S mitochondrial ribosomes consist of a small (37S) and a large (54S) subunit. The 37S small subunit contains a 15S ribosomal RNA (15S mt-rRNA) and 34 different proteins. The 54S large subunit contains a 21S rRNA (21S mt-rRNA) and 46 different proteins.

The protein localises to the mitochondrion. Its function is as follows. Component of the mitochondrial ribosome (mitoribosome), a dedicated translation machinery responsible for the synthesis of mitochondrial genome-encoded proteins, including at least some of the essential transmembrane subunits of the mitochondrial respiratory chain. The mitoribosomes are attached to the mitochondrial inner membrane and translation products are cotranslationally integrated into the membrane. bL19m is essential for respiration. The chain is Large ribosomal subunit protein bL19m (IMG1) from Saccharomyces cerevisiae (strain ATCC 204508 / S288c) (Baker's yeast).